We begin with the raw amino-acid sequence, 268 residues long: Membrane lipoprotein TpN32 (268 aa).

An N-terminal signal peptide occupies residues 1–23; that stretch reads MKGKTVSAALVGKLIALSVGVVA. C24 carries the N-palmitoyl cysteine lipid modification. C24 carries S-diacylglycerol cysteine lipidation.

The protein belongs to the NlpA lipoprotein family.

The protein resides in the cell membrane. The chain is Membrane lipoprotein TpN32 (tpn32) from Treponema pallidum (strain Nichols).